The primary structure comprises 139 residues: Holo-[acyl-carrier-protein] synthase (139 aa).

D8 and E57 together coordinate Mg(2+).

Belongs to the P-Pant transferase superfamily. AcpS family. Mg(2+) is required as a cofactor.

It is found in the cytoplasm. It catalyses the reaction apo-[ACP] + CoA = holo-[ACP] + adenosine 3',5'-bisphosphate + H(+). In terms of biological role, transfers the 4'-phosphopantetheine moiety from coenzyme A to a Ser of acyl-carrier-protein. The polypeptide is Holo-[acyl-carrier-protein] synthase (Dinoroseobacter shibae (strain DSM 16493 / NCIMB 14021 / DFL 12)).